We begin with the raw amino-acid sequence, 256 residues long: ATP synthase subunit a (256 aa).

Residues 1–7 constitute a propeptide, removed in mature form; it reads MLNLFIT. A run of 6 helical transmembrane segments spans residues 33 to 53, 92 to 112, 122 to 142, 148 to 168, 188 to 208, and 209 to 229; these read FTTF…LNLL, YFPL…ISMI, LIFI…IGLT, FFSL…LVLI, VLSG…LMSM, and SIIT…IVVL.

Belongs to the ATPase A chain family. F-type ATPases have 2 components, CF(1) - the catalytic core - and CF(0) - the membrane proton channel. CF(1) has five subunits: alpha(3), beta(3), gamma(1), delta(1), epsilon(1). CF(0) has three main subunits: a, b and c.

The protein localises to the mitochondrion inner membrane. In terms of biological role, mitochondrial membrane ATP synthase (F(1)F(0) ATP synthase or Complex V) produces ATP from ADP in the presence of a proton gradient across the membrane which is generated by electron transport complexes of the respiratory chain. F-type ATPases consist of two structural domains, F(1) - containing the extramembraneous catalytic core and F(0) - containing the membrane proton channel, linked together by a central stalk and a peripheral stalk. During catalysis, ATP synthesis in the catalytic domain of F(1) is coupled via a rotary mechanism of the central stalk subunits to proton translocation. Key component of the proton channel; it may play a direct role in the translocation of protons across the membrane. This is ATP synthase subunit a (ATP6) from Kluyveromyces lactis (strain ATCC 8585 / CBS 2359 / DSM 70799 / NBRC 1267 / NRRL Y-1140 / WM37) (Yeast).